Here is a 408-residue protein sequence, read N- to C-terminus: Succinylornithine transaminase (408 aa).

At lysine 252 the chain carries N6-(pyridoxal phosphate)lysine.

It belongs to the class-III pyridoxal-phosphate-dependent aminotransferase family. AstC subfamily. Pyridoxal 5'-phosphate serves as cofactor.

It catalyses the reaction N(2)-succinyl-L-ornithine + 2-oxoglutarate = N-succinyl-L-glutamate 5-semialdehyde + L-glutamate. It participates in amino-acid degradation; L-arginine degradation via AST pathway; L-glutamate and succinate from L-arginine: step 3/5. Catalyzes the transamination of N(2)-succinylornithine and alpha-ketoglutarate into N(2)-succinylglutamate semialdehyde and glutamate. Can also act as an acetylornithine aminotransferase. This is Succinylornithine transaminase from Salmonella paratyphi B (strain ATCC BAA-1250 / SPB7).